The following is a 314-amino-acid chain: DNA-directed RNA polymerase subunit alpha (314 aa).

The alpha N-terminal domain (alpha-NTD) stretch occupies residues 1 to 228; sequence MIEIEKPKIE…EHLSIFVNLT (228 aa). The tract at residues 245–314 is alpha C-terminal domain (alpha-CTD); that stretch reads KEKVLEMTIE…DLGLSLRNEN (70 aa).

The protein belongs to the RNA polymerase alpha chain family. Homodimer. The RNAP catalytic core consists of 2 alpha, 1 beta, 1 beta' and 1 omega subunit. When a sigma factor is associated with the core the holoenzyme is formed, which can initiate transcription.

It carries out the reaction RNA(n) + a ribonucleoside 5'-triphosphate = RNA(n+1) + diphosphate. Its function is as follows. DNA-dependent RNA polymerase catalyzes the transcription of DNA into RNA using the four ribonucleoside triphosphates as substrates. The polypeptide is DNA-directed RNA polymerase subunit alpha (Listeria innocua serovar 6a (strain ATCC BAA-680 / CLIP 11262)).